An 887-amino-acid polypeptide reads, in one-letter code: Chaperone protein ClpB 2 (887 aa).

A Clp R domain is found at 6-147; sequence PTKFTDKAWE…AATVKAIRGA (142 aa). 2 repeat regions span residues 9–73 and 84–147; these read FTDK…ARQQ and CGRS…IRGA. Residues 160 to 342 form an NBD1 region; the sequence is AALEKYGRDL…RRFQQVYIGQ (183 aa). 207–214 serves as a coordination point for ATP; that stretch reads GEPGVGKT. Residues 343-559 are linker; the sequence is PSVEDTISIL…IAEIVAKWTG (217 aa). Residues 393–535 adopt a coiled-coil conformation; sequence IDLVDEAAAK…TEAQLLELQA (143 aa). The interval 569 to 780 is NBD2; sequence ERQKLLQLEQ…RIDDVILFHG (212 aa). 619 to 626 is an ATP binding site; the sequence is GPTGVGKT. Residues 781–887 are C-terminal; the sequence is LGRTELAQIA…TGDRDTVSAS (107 aa).

It belongs to the ClpA/ClpB family. As to quaternary structure, homohexamer. The oligomerization is ATP-dependent.

It is found in the cytoplasm. Its function is as follows. Part of a stress-induced multi-chaperone system, it is involved in the recovery of the cell from heat-induced damage, in cooperation with DnaK, DnaJ and GrpE. Acts before DnaK, in the processing of protein aggregates. Protein binding stimulates the ATPase activity; ATP hydrolysis unfolds the denatured protein aggregates, which probably helps expose new hydrophobic binding sites on the surface of ClpB-bound aggregates, contributing to the solubilization and refolding of denatured protein aggregates by DnaK. The chain is Chaperone protein ClpB 2 (clpB2) from Thermosynechococcus vestitus (strain NIES-2133 / IAM M-273 / BP-1).